A 117-amino-acid polypeptide reads, in one-letter code: Protein OPG035 (117 aa).

Belongs to the poxviridae OPG035 family.

Bcl-2-like protein which contributes to virulence by preventing host NF-kappa-B activation in response to pro-inflammatory stimuli such as TNF-alpha or IL1B. The polypeptide is Protein OPG035 (OPG035) (Bos taurus (Bovine)).